A 403-amino-acid polypeptide reads, in one-letter code: Pyruvate, phosphate dikinase regulatory protein 1, chloroplastic (403 aa).

Residues 1–86 (MALLSAMKLQ…NTTGPMRPIE (86 aa)) constitute a chloroplast transit peptide. The tract at residues 1-108 (MALLSAMKLQ…DVSSSSNGVS (108 aa)) is disordered. Low complexity-rich tracts occupy residues 17 to 26 (SSNLNPNSKP), 69 to 80 (STITNGSNNTTG), and 87 to 108 (SSSRTDVSTLDSDVSSSSNGVS). Position 269-276 (269-276 (GVSRTGKT)) interacts with ADP.

Belongs to the pyruvate, phosphate/water dikinase regulatory protein family. PDRP subfamily. In terms of assembly, interacts with PPDK1. In terms of tissue distribution, expressed in green tissues.

It localises to the plastid. It is found in the chloroplast stroma. It catalyses the reaction N(tele)-phospho-L-histidyl/L-threonyl-[pyruvate, phosphate dikinase] + ADP = N(tele)-phospho-L-histidyl/O-phospho-L-threonyl-[pyruvate, phosphate dikinase] + AMP + H(+). It carries out the reaction N(tele)-phospho-L-histidyl/O-phospho-L-threonyl-[pyruvate, phosphate dikinase] + phosphate + H(+) = N(tele)-phospho-L-histidyl/L-threonyl-[pyruvate, phosphate dikinase] + diphosphate. Its activity is regulated as follows. Regulated by light/dark exposure. In terms of biological role, bifunctional serine/threonine kinase and phosphorylase involved in the dark/light-mediated regulation of PPDK by catalyzing its phosphorylation/dephosphorylation. Dark/light-induced changes in stromal concentrations of the competing ADP and Pi substrates govern the direction of the reaction. In the dark, phosphorylates the catalytic intermediate of PPDK (PPDK-HisP), inactivating it. Light exposure induces the phosphorolysis reaction that reactivates PPDK. Unlike the kinase function which can utilize either Thr or Ser as target, the phosphorylase function has a strict substrate requirement for threonyl phosphate. This Arabidopsis thaliana (Mouse-ear cress) protein is Pyruvate, phosphate dikinase regulatory protein 1, chloroplastic (RP1).